Consider the following 136-residue polypeptide: Protein BUNDLE SHEATH DEFECTIVE 2, chloroplastic (136 aa).

The N-terminal 56 residues, 1 to 56 (MANSLCFFSSPPTFCFQSPSKNPKPSHFFSTNDNTSSLVQKRELLQTSRSQSFEVK), are a transit peptide targeting the chloroplast. The CR-type zinc-finger motif lies at 62–133 (PQGTKPNSLV…AGFIGGFLST (72 aa)). Zn(2+)-binding residues include Cys-72, Cys-75, Glu-78, Cys-80, Cys-83, Cys-86, Cys-107, Cys-110, Glu-115, Cys-118, and Cys-121.

Belongs to the BSD2 chaperone family. As to quaternary structure, interacts with the RuBisCo large subunit (RbcL) assembled as an intermediate complex made of eight RbcL and eight BSD2 subunits.

The protein resides in the plastid. It is found in the chloroplast stroma. Its function is as follows. Chloroplast chaperone required for RuBisCo biogenesis and translational regulation of the RuBisCo large subunit (RbcL). Stabilizes an end-state assembly intermediate of eight RbcL subunits until the small subunits (RBCSs) become available to produce a complete stable RuBisCo complex containing eight small and eight large subunits. The sequence is that of Protein BUNDLE SHEATH DEFECTIVE 2, chloroplastic from Arabidopsis thaliana (Mouse-ear cress).